Here is a 130-residue protein sequence, read N- to C-terminus: Small ribosomal subunit protein uS8 (130 aa).

Belongs to the universal ribosomal protein uS8 family. Part of the 30S ribosomal subunit. Contacts proteins S5 and S12.

In terms of biological role, one of the primary rRNA binding proteins, it binds directly to 16S rRNA central domain where it helps coordinate assembly of the platform of the 30S subunit. This is Small ribosomal subunit protein uS8 from Moorella thermoacetica (strain ATCC 39073 / JCM 9320).